Here is a 305-residue protein sequence, read N- to C-terminus: Phosphatidate cytidylyltransferase (305 aa).

A run of 8 helical transmembrane segments spans residues 27 to 47, 67 to 87, 96 to 116, 124 to 144, 150 to 170, 202 to 222, 232 to 252, and 277 to 297; these read FLVILLCTSLYPSSAFIVGLL, FPFSFTRYSALGSAIFIALTC, FPEHIDLLPWFFLFFWTIRLV, LGPIGSTGLALFCMLYVSVPI, ILYGFVHTDTPFVGIWWAIFL, TVVGFIAGCCGSILVSLLFYS, IAVPWILIALGTVLGVSGFFG, and MLDVLDSLLLSTPIVYAILLI.

It belongs to the CDS family.

Its subcellular location is the cell membrane. It catalyses the reaction a 1,2-diacyl-sn-glycero-3-phosphate + CTP + H(+) = a CDP-1,2-diacyl-sn-glycerol + diphosphate. It participates in phospholipid metabolism; CDP-diacylglycerol biosynthesis; CDP-diacylglycerol from sn-glycerol 3-phosphate: step 3/3. This chain is Phosphatidate cytidylyltransferase (cdsA), found in Chlamydia trachomatis serovar D (strain ATCC VR-885 / DSM 19411 / UW-3/Cx).